Consider the following 153-residue polypeptide: Bkd operon transcriptional regulator (153 aa).

The 62-residue stretch at 4–65 (LDRIDLKILR…RLDEERLSGA (62 aa)) folds into the HTH asnC-type domain. A DNA-binding region (H-T-H motif) is located at residues 23-42 (WRDLAQKVGLSLTPTLRRVR).

In terms of biological role, positive regulator of the bkd operon for branched-chain keto acid dehydrogenase complex. This Pseudomonas aeruginosa (strain ATCC 15692 / DSM 22644 / CIP 104116 / JCM 14847 / LMG 12228 / 1C / PRS 101 / PAO1) protein is Bkd operon transcriptional regulator (bkdR).